The following is a 125-amino-acid chain: Small ribosomal subunit protein uS12 (125 aa).

Position 89 is a 3-methylthioaspartic acid (aspartate 89). The interval 106-125 (GVKDRKQSRSKYGAKRPKKA) is disordered. The segment covering 113-125 (SRSKYGAKRPKKA) has biased composition (basic residues).

This sequence belongs to the universal ribosomal protein uS12 family. In terms of assembly, part of the 30S ribosomal subunit. Contacts proteins S8 and S17. May interact with IF1 in the 30S initiation complex.

Its function is as follows. With S4 and S5 plays an important role in translational accuracy. Functionally, interacts with and stabilizes bases of the 16S rRNA that are involved in tRNA selection in the A site and with the mRNA backbone. Located at the interface of the 30S and 50S subunits, it traverses the body of the 30S subunit contacting proteins on the other side and probably holding the rRNA structure together. The combined cluster of proteins S8, S12 and S17 appears to hold together the shoulder and platform of the 30S subunit. The polypeptide is Small ribosomal subunit protein uS12 (Variovorax paradoxus (strain S110)).